The sequence spans 519 residues: Alkaline phosphatase, tissue-nonspecific isozyme (519 aa).

A signal peptide spans 1–16; that stretch reads MKAFLLTLLAQLCSAS. Position 59 (Asp-59) interacts with Mg(2+). Asp-59 and Ser-109 together coordinate Zn(2+). The active-site Phosphoserine intermediate is Ser-109. A disulfide bridge links Cys-138 with Cys-200. N-linked (GlcNAc...) asparagine glycosylation occurs at Asn-139. Thr-172 contacts Mg(2+). A glycan (N-linked (GlcNAc...) asparagine) is linked at Asn-229. Glu-234 lines the Ca(2+) pocket. An N-linked (GlcNAc...) asparagine glycan is attached at Asn-278. Residues Phe-289 and Glu-290 each coordinate Ca(2+). The N-linked (GlcNAc...) asparagine glycan is linked to Asn-302. Asp-305 is a Ca(2+) binding site. Residue Glu-331 participates in Mg(2+) binding. Positions 336, 340, 377, and 378 each coordinate Zn(2+). N-linked (GlcNAc...) asparagine glycosylation is present at Asn-429. His-453 contacts Zn(2+). The cysteines at positions 488 and 496 are disulfide-linked. Ser-498 carries the GPI-anchor amidated serine lipid modification. Residues 499–519 constitute a propeptide, removed in mature form; sequence AARPAATATLLPVLLLLLLLC.

It belongs to the alkaline phosphatase family. As to quaternary structure, homodimer. It depends on Mg(2+) as a cofactor. The cofactor is Zn(2+). Requires Ca(2+) as cofactor.

It is found in the cell membrane. The protein resides in the extracellular vesicle membrane. The catalysed reaction is a phosphate monoester + H2O = an alcohol + phosphate. It catalyses the reaction diphosphate + H2O = 2 phosphate + H(+). The enzyme catalyses pyridoxal 5'-phosphate + H2O = pyridoxal + phosphate. It carries out the reaction phosphoethanolamine + H2O = ethanolamine + phosphate. The catalysed reaction is ATP + H2O = ADP + phosphate + H(+). It catalyses the reaction ADP + H2O = AMP + phosphate + H(+). The enzyme catalyses AMP + H2O = adenosine + phosphate. Alkaline phosphatase that metabolizes various phosphate compounds and plays a key role in skeletal mineralization and adaptive thermogenesis. Has broad substrate specificity and can hydrolyze a considerable variety of compounds: however, only a few substrates, such as diphosphate (inorganic pyrophosphate; PPi) and pyridoxal 5'-phosphate (PLP) are natural substrates. Plays an essential role in skeletal and dental mineralization via its ability to hydrolyze extracellular diphosphate, a potent mineralization inhibitor, to phosphate: it thereby promotes hydroxyapatite crystal formation and increases inorganic phosphate concentration. Catalyzes dephosphorylation of PLP to pyridoxal (PL), the transportable form of vitamin B6, in order to provide a sufficient amount of PLP in the brain, an essential cofactor for enzymes catalyzing the synthesis of diverse neurotransmitters. Additionally, also able to mediate ATP degradation in a stepwise manner to adenosine, thereby regulating the availability of ligands for purinergic receptors. Involved in the establishment and growth of feather germs. This chain is Alkaline phosphatase, tissue-nonspecific isozyme (ALPL), found in Gallus gallus (Chicken).